Consider the following 100-residue polypeptide: MKLSYLSLALAIILVLAIVYSPHMEVKALADAEPDAIGFADAFGEADAEPKRRRRLRKIIRKVIKGTGKVAGEAAASAVAGAAVSAAIDAAVGTTEEPEQ.

Residues 1 to 17 (MKLSYLSLALAIILVLA) form the signal peptide. Residues 18–50 (IVYSPHMEVKALADAEPDAIGFADAFGEADAEP) constitute a propeptide that is removed on maturation. O-linked (GalNAc...) serine glycosylation occurs at Ser-85. O-linked (GalNAc...) threonine glycans are attached at residues Thr-94 and Thr-95.

Belongs to the formicidae venom precursor-01 superfamily. In terms of processing, glycosylation is critical to maintaining the aqueous solubility of this protein, but does not directly contribute to its activity. As to expression, expressed by the venom gland.

It localises to the secreted. The protein localises to the target cell membrane. Functionally, neurotoxin that triggers pain behavior and inflammation in mammals, and is paralytic and lethal to insects. Causes a time-dependent increase in cell leak current. May act by targeting membranes. The sequence is that of U-myrmeciitoxin(01)-Mg7c from Myrmecia gulosa (Red bulldog ant).